Reading from the N-terminus, the 311-residue chain is Putative mitochondrial transporter UCP3 (311 aa).

Residues 1 to 10 lie on the Mitochondrial intermembrane side of the membrane; the sequence is MVGLKPSEVP. A helical transmembrane segment spans residues 11–32; that stretch reads PTTAVKFLGAGTAACFADLLTF. Solcar repeat units lie at residues 11–105, 114–205, and 214–299; these read PTTA…VKQF, SSIT…IKEK, and DNFP…LKRA. Topologically, residues 33–76 are mitochondrial matrix; the sequence is PLDTAKVRLQIQGENQATQAARRIQYRGVLGTILTMVRTEGPRS. A helical membrane pass occupies residues 77 to 99; it reads PYNGLVAGLQRQMSFASIRIGLY. Over 100–119 the chain is Mitochondrial intermembrane; that stretch reads DSVKQFYTPKGSDHSSITTR. Residues 120-136 form a helical membrane-spanning segment; that stretch reads ILAGCTTGAMAVSCAQP. At 137–182 the chain is on the mitochondrial matrix side; it reads TDVVKVRFQASIHLGAGSNRKYSGTMDAYRTIAREEGVRGLWKGTL. A helical membrane pass occupies residues 183-199; it reads PNITRNAIVNCAEMVTY. The Mitochondrial intermembrane segment spans residues 200–216; that stretch reads DIIKEKLLDYHLLTDNF. A helical transmembrane segment spans residues 217-236; it reads PCHLISAFGAGFCATVVASP. Over 237–270 the chain is Mitochondrial matrix; it reads VDVVKTRYMNSPPGQYCSPLDCMLKMVTQEGPTA. A helical transmembrane segment spans residues 271 to 293; it reads FYKGFTPSFLRLGTWNVVMFVTY. The tract at residues 278–300 is purine nucleotide binding; that stretch reads SFLRLGTWNVVMFVTYEQLKRAL. Topologically, residues 294-311 are mitochondrial intermembrane; the sequence is EQLKRALMKVQMLRESPF.

This sequence belongs to the mitochondrial carrier (TC 2.A.29) family. In terms of assembly, interacts with HAX1; the interaction is direct and calcium-dependent.

The protein resides in the mitochondrion inner membrane. Putative transmembrane transporter that plays a role in mitochondrial metabolism via an as yet unclear mechanism. Originally, this mitochondrial protein was thought to act as a proton transmembrane transporter from the mitochondrial intermembrane space into the matrix, causing proton leaks through the inner mitochondrial membrane, thereby uncoupling mitochondrial membrane potential generation from ATP synthesis. However, this function is controversial and uncoupling may not be the function, or at least not the main function, but rather a consequence of more conventional metabolite transporter activity. In Canis lupus familiaris (Dog), this protein is Putative mitochondrial transporter UCP3.